We begin with the raw amino-acid sequence, 183 residues long: ATP-dependent protease subunit HslV (183 aa).

The active site involves T7. Residues G162, C165, and T168 each coordinate Na(+).

Belongs to the peptidase T1B family. HslV subfamily. A double ring-shaped homohexamer of HslV is capped on each side by a ring-shaped HslU homohexamer. The assembly of the HslU/HslV complex is dependent on binding of ATP.

The protein localises to the cytoplasm. It carries out the reaction ATP-dependent cleavage of peptide bonds with broad specificity.. Allosterically activated by HslU binding. Protease subunit of a proteasome-like degradation complex believed to be a general protein degrading machinery. The chain is ATP-dependent protease subunit HslV from Chromobacterium violaceum (strain ATCC 12472 / DSM 30191 / JCM 1249 / CCUG 213 / NBRC 12614 / NCIMB 9131 / NCTC 9757 / MK).